The following is a 102-amino-acid chain: Small ribosomal subunit protein uS10 (102 aa).

The protein belongs to the universal ribosomal protein uS10 family. As to quaternary structure, part of the 30S ribosomal subunit.

In terms of biological role, involved in the binding of tRNA to the ribosomes. The polypeptide is Small ribosomal subunit protein uS10 (Clostridium novyi (strain NT)).